We begin with the raw amino-acid sequence, 101 residues long: CRISPR-associated endoribonuclease Cas2 (101 aa).

Asp17 serves as a coordination point for Mg(2+).

It belongs to the CRISPR-associated endoribonuclease Cas2 protein family. As to quaternary structure, homodimer, forms a heterotetramer with a Cas1 homodimer. Mg(2+) is required as a cofactor.

In terms of biological role, CRISPR (clustered regularly interspaced short palindromic repeat), is an adaptive immune system that provides protection against mobile genetic elements (viruses, transposable elements and conjugative plasmids). CRISPR clusters contain sequences complementary to antecedent mobile elements and target invading nucleic acids. CRISPR clusters are transcribed and processed into CRISPR RNA (crRNA). Functions as a ssRNA-specific endoribonuclease. Involved in the integration of spacer DNA into the CRISPR cassette. This is CRISPR-associated endoribonuclease Cas2 from Methanopyrus kandleri (strain AV19 / DSM 6324 / JCM 9639 / NBRC 100938).